Here is a 967-residue protein sequence, read N- to C-terminus: Disks large homolog 1 (967 aa).

The L27 domain occupies serine 5–arginine 65. The PDZ 1 domain maps to asparagine 202–lysine 289. The tract at residues isoleucine 324–glutamine 351 is disordered. Residues proline 330 to valine 339 are compositionally biased toward pro residues. 2 consecutive PDZ domains span residues valine 361 to threonine 448 and proline 510 to proline 591. The region spanning arginine 619–glutamate 690 is the SH3 domain. The interval glutamate 673–serine 723 is disordered. Over residues serine 682–glutamine 696 the composition is skewed to basic residues. Over residues valine 697–leucine 715 the composition is skewed to polar residues. In terms of domain architecture, Guanylate kinase-like spans valine 769–serine 955.

This sequence belongs to the MAGUK family. As to quaternary structure, homooligomerizes; requires L27 domain. Interacts (via L27 domain) with ajm-1; the interaction regulates ajm-1 apical junction location. As to expression, expressed in the apical junctions in the hypodermis. Expressed in epithelial cells in the reproductive system including vulva, uterus and spermatheca.

The protein resides in the membrane. The protein localises to the apical cell membrane. It is found in the cell junction. It localises to the adherens junction. Its subcellular location is the lateral cell membrane. The protein resides in the cytoplasm. Essential multidomain scaffolding protein required for normal development. Recruits channels, receptors and signaling molecules to discrete plasma membrane domains in polarized cells. Required for proper embryonic elongation. Acts upstream of ajm-1 and becomes localized to apical junctions independently of ajm-1. With let-413, cooperatively regulates ajm-1 localization to apical junctions and the establishment of newly formed epithelia. Plays a role in assembling the adherens junction by clustering ajm-1 and other proteins, to form electron-dense structures; may form a compartment distinct to that of hmp-1 and associated proteins. Plays a role in the directed outgrowth of seam cells, towards neighboring seam cells, during larval development. This Caenorhabditis elegans protein is Disks large homolog 1.